Consider the following 695-residue polypeptide: C6 finger domain transcription factor nscR (695 aa).

Residues 17-43 constitute a DNA-binding region (zn(2)-C6 fungal-type); the sequence is CELCRERKVKCDKLDPCTNCASAGVVC. Over residues 101-113 the composition is skewed to low complexity; it reads SMRSSASQSSNQD. The interval 101 to 146 is disordered; sequence SMRSSASQSSNQDQESRDAIESISNETEDASAPTPDSSRMPLGDGG.

The protein resides in the nucleus. In terms of biological role, transcription factor that specifically regulates the neosartoricin B biosynthesis gene cluster. The sequence is that of C6 finger domain transcription factor nscR from Arthroderma otae (strain ATCC MYA-4605 / CBS 113480) (Microsporum canis).